Reading from the N-terminus, the 228-residue chain is L-ribulose-5-phosphate 4-epimerase UlaF (228 aa).

Substrate contacts are provided by residues 26–27, 43–44, and 72–73; these read GN, SG, and SS. Asp74, His93, and His95 together coordinate Zn(2+). Asp118 functions as the Proton donor/acceptor in the catalytic mechanism. Residue His167 participates in Zn(2+) binding. Tyr225 serves as the catalytic Proton donor/acceptor.

This sequence belongs to the aldolase class II family. AraD/FucA subfamily. Zn(2+) serves as cofactor.

The enzyme catalyses L-ribulose 5-phosphate = D-xylulose 5-phosphate. It functions in the pathway cofactor degradation; L-ascorbate degradation; D-xylulose 5-phosphate from L-ascorbate: step 4/4. Its function is as follows. Catalyzes the isomerization of L-ribulose 5-phosphate to D-xylulose 5-phosphate. Is involved in the anaerobic L-ascorbate utilization. The chain is L-ribulose-5-phosphate 4-epimerase UlaF from Salmonella paratyphi A (strain ATCC 9150 / SARB42).